Reading from the N-terminus, the 135-residue chain is Small ribosomal subunit protein uS11 (135 aa).

Belongs to the universal ribosomal protein uS11 family. Part of the 30S ribosomal subunit. Interacts with proteins S7 and S18. Binds to IF-3.

Functionally, located on the platform of the 30S subunit, it bridges several disparate RNA helices of the 16S rRNA. Forms part of the Shine-Dalgarno cleft in the 70S ribosome. This Polynucleobacter asymbioticus (strain DSM 18221 / CIP 109841 / QLW-P1DMWA-1) (Polynucleobacter necessarius subsp. asymbioticus) protein is Small ribosomal subunit protein uS11.